The following is a 242-amino-acid chain: Uridylate kinase (242 aa).

15-18 (KLSG) lines the ATP pocket. G57 serves as a coordination point for UMP. ATP-binding residues include G58 and R62. UMP-binding positions include D78 and 139-146 (TGNPFFTT). Positions 166, 172, and 175 each coordinate ATP.

Belongs to the UMP kinase family. In terms of assembly, homohexamer.

The protein resides in the cytoplasm. The catalysed reaction is UMP + ATP = UDP + ADP. It functions in the pathway pyrimidine metabolism; CTP biosynthesis via de novo pathway; UDP from UMP (UMPK route): step 1/1. Its activity is regulated as follows. Inhibited by UTP. Catalyzes the reversible phosphorylation of UMP to UDP. This Acinetobacter baylyi (strain ATCC 33305 / BD413 / ADP1) protein is Uridylate kinase.